A 471-amino-acid chain; its full sequence is Collagenase 3 (471 aa).

The N-terminal stretch at 1–19 is a signal peptide; the sequence is MHPGVLAAFLFLSWTHCRA. Residues 20-103 constitute a propeptide, activation peptide; the sequence is LPLPSGGDED…PRCGVPDVGE (84 aa). Positions 94–101 match the Cysteine switch motif; that stretch reads PRCGVPDV. Cysteine 96 lines the Zn(2+) pocket. Asparagine 117 carries N-linked (GlcNAc...) asparagine glycosylation. Residue aspartate 128 participates in Ca(2+) binding. N-linked (GlcNAc...) asparagine glycosylation occurs at asparagine 152. A Ca(2+)-binding site is contributed by aspartate 162. Zn(2+) is bound by residues histidine 172 and aspartate 174. Positions 176–246 are interaction with TIMP2; sequence YPFDGPSGLL…GALMFPIYTY (71 aa). Residues aspartate 179, glycine 180, serine 182, and leucine 184 each coordinate Ca(2+). Residue histidine 187 coordinates Zn(2+). The Ca(2+) site is built by asparagine 194, glycine 196, and aspartate 198. Zn(2+) is bound at residue histidine 200. Ca(2+)-binding residues include aspartate 202, aspartate 203, and glutamate 205. Histidine 222 provides a ligand contact to Zn(2+). The active site involves glutamate 223. Zn(2+) is bound by residues histidine 226, histidine 232, and methionine 240. Residues 263–284 are disordered; it reads QSLYGPGDEDPNPKHPKTPDKC. Residues 268–471 form an interaction with collagen region; sequence PGDEDPNPKH…VMPANSILWC (204 aa). Residues 273 to 284 show a composition bias toward basic and acidic residues; that stretch reads PNPKHPKTPDKC. Hemopexin repeat units lie at residues 281–330, 331–377, 379–427, and 428–471; these read PDKC…WPEL, PNRI…GLPK, VKKI…FPGI, and GDKV…ILWC. Cysteine 284 and cysteine 471 form a disulfide bridge. Ca(2+)-binding residues include aspartate 291, isoleucine 293, aspartate 335, and alanine 337. At tyrosine 366 the chain carries Phosphotyrosine; by PKDCC. Ca(2+) is bound by residues serine 383, alanine 385, aspartate 432, and valine 434.

It belongs to the peptidase M10A family. As to quaternary structure, monomer. Interacts with TIMP1, TIMP2 and TIMP3. Binds (via the C-terminal region) to collagen. It depends on Ca(2+) as a cofactor. Zn(2+) is required as a cofactor. The proenzyme is activated by removal of the propeptide; this cleavage can be effected by other matrix metalloproteinases, such as MMP2, MMP3 and MMP14 and may involve several cleavage steps. Cleavage can also be autocatalytic, after partial maturation by another protease or after treatment with 4-aminophenylmercuric acetate (APMA) (in vitro). In terms of processing, N-glycosylated. Post-translationally, tyrosine phosphorylated by PKDCC/VLK. Detected in fetal cartilage and calvaria, in chondrocytes of hypertrophic cartilage in vertebrae and in the dorsal end of ribs undergoing ossification, as well as in osteoblasts and periosteal cells below the inner periosteal region of ossified ribs. Detected in chondrocytes from in joint cartilage that have been treated with TNF and IL1B, but not in untreated chondrocytes. Detected in T lymphocytes. Detected in breast carcinoma tissue.

Its subcellular location is the secreted. The protein localises to the extracellular space. The protein resides in the extracellular matrix. Inhibited by TIMP1, TIMP2 and TIMP3. Inhibited by acetohydroxamic acid and other zinc chelators. Functionally, plays a role in the degradation of extracellular matrix proteins including fibrillar collagen, fibronectin, TNC and ACAN. Cleaves triple helical collagens, including type I, type II and type III collagen, but has the highest activity with soluble type II collagen. Can also degrade collagen type IV, type XIV and type X. May also function by activating or degrading key regulatory proteins, such as TGFB1 and CCN2. Plays a role in wound healing, tissue remodeling, cartilage degradation, bone development, bone mineralization and ossification. Required for normal embryonic bone development and ossification. Plays a role in the healing of bone fractures via endochondral ossification. Plays a role in wound healing, probably by a mechanism that involves proteolytic activation of TGFB1 and degradation of CCN2. Plays a role in keratinocyte migration during wound healing. May play a role in cell migration and in tumor cell invasion. This Homo sapiens (Human) protein is Collagenase 3 (MMP13).